A 51-amino-acid polypeptide reads, in one-letter code: Light-harvesting protein B-800/850 beta chain (51 aa).

The Cytoplasmic segment spans residues 2-23 (ADDANKVWPSGLTTAEAEELQK). The chain crosses the membrane as a helical span at residues 24–46 (GLVDGTRVFGVIAVLAHILAYAY). A bacteriochlorophyll is bound at residue histidine 40. Topologically, residues 47 to 51 (TPWLH) are periplasmic.

Belongs to the antenna complex beta subunit family. In terms of assembly, an alpha/beta heterodimer conjugated to 3 bacteriochlorophyll molecules. The core complex is formed by different alpha and beta chains, binding bacteriochlorophyll molecules, and arranged most probably in tetrameric structures disposed around the reaction center. The non-pigmented gamma chains may constitute additional components.

Its subcellular location is the cell inner membrane. Its function is as follows. Antenna complexes are light-harvesting systems, which transfer the excitation energy to the reaction centers. In Rubrivivax gelatinosus (Rhodocyclus gelatinosus), this protein is Light-harvesting protein B-800/850 beta chain (pucB).